The sequence spans 961 residues: Gamma-tubulin small complex component GCP2 (961 aa).

Residues asparagine 15 to glutamate 76 form a disordered region. Positions leucine 43–serine 54 are enriched in polar residues. Basic and acidic residues predominate over residues serine 55 to aspartate 65.

This sequence belongs to the TUBGCP family. As to quaternary structure, component of the gamma-tubulin small complex (gamma-TuSC) composed of tubulin gamma chain, gamma-tubulin complex protein 2 (GCP2) and gamma-tubulin complex protein 3 (GCP3). Interacts with tubulin gamma chain.

The protein localises to the cytoplasm. It is found in the cytoskeleton. The protein resides in the flagellum axoneme. It localises to the flagellum basal body. In terms of biological role, component of the gamma-tubulin small complex (gamma-TuSC) involved in microtubule (MT) nucleation for the formation of median bodies and in the biogenesis of flagella. Gamma-TuSC may be required for the correct positioning of EB1 within the trophozoites. This is Gamma-tubulin small complex component GCP2 from Giardia intestinalis (strain ATCC 50803 / WB clone C6) (Giardia lamblia).